The following is a 350-amino-acid chain: N-acetyl-gamma-glutamyl-phosphate reductase (350 aa).

The active site involves Cys153.

This sequence belongs to the NAGSA dehydrogenase family. Type 1 subfamily.

The protein localises to the cytoplasm. The catalysed reaction is N-acetyl-L-glutamate 5-semialdehyde + phosphate + NADP(+) = N-acetyl-L-glutamyl 5-phosphate + NADPH + H(+). The protein operates within amino-acid biosynthesis; L-arginine biosynthesis; N(2)-acetyl-L-ornithine from L-glutamate: step 3/4. Functionally, catalyzes the NADPH-dependent reduction of N-acetyl-5-glutamyl phosphate to yield N-acetyl-L-glutamate 5-semialdehyde. The sequence is that of N-acetyl-gamma-glutamyl-phosphate reductase from Thermosynechococcus vestitus (strain NIES-2133 / IAM M-273 / BP-1).